The following is a 218-amino-acid chain: Carnitine transport permease protein OpuCB (218 aa).

One can recognise an ABC transmembrane type-1 domain in the interval 19–198; the sequence is TWQHLFISLS…ILALVVEFAL (180 aa). Helical transmembrane passes span 23–43, 48–68, 79–101, 149–169, and 179–199; these read LFISLSAVILGIAVAVPTGIL, PKVANFVIGVVSVLQTVPSLA, VGTLPAIIALFIYALLPILRNTF, VIAWATLASYIGAGGLGDFIF, and LILGGAIPVTILALVVEFALG.

It belongs to the binding-protein-dependent transport system permease family. In terms of assembly, the complex is composed of two ATP-binding proteins (OpuCA), two transmembrane proteins (OpuCB and OpuCD) and a solute-binding protein (OpuCC).

Its subcellular location is the cell membrane. In terms of biological role, part of the ABC transporter complex OpuCABCD involved in carnitine uptake. Probably responsible for the translocation of the substrate across the membrane. Involved, with BetL and GbuABC, in osmoprotection and cryoprotection of Listeria. The polypeptide is Carnitine transport permease protein OpuCB (opuCB) (Listeria monocytogenes).